The sequence spans 159 residues: Ribonuclease H (159 aa).

The 142-residue stretch at 1 to 142 (MHKQVEIFTD…CDELAKAAAQ (142 aa)) folds into the RNase H type-1 domain. Positions 10, 48, 70, and 134 each coordinate Mg(2+). The interval 135–159 (ELAKAAAQSPTKEDTGYLESQQDKT) is disordered. The span at 145-159 (TKEDTGYLESQQDKT) shows a compositional bias: basic and acidic residues.

Belongs to the RNase H family. As to quaternary structure, monomer. Mg(2+) serves as cofactor.

It is found in the cytoplasm. The catalysed reaction is Endonucleolytic cleavage to 5'-phosphomonoester.. Endonuclease that specifically degrades the RNA of RNA-DNA hybrids. The chain is Ribonuclease H from Proteus mirabilis (strain HI4320).